Here is a 418-residue protein sequence, read N- to C-terminus: Torsin-4A-B (418 aa).

Residues 128–144 form a helical membrane-spanning segment; the sequence is CLLLFVGIVCFQIFNAI. An ATP-binding site is contributed by 200-207; the sequence is GPSGVGKS.

It belongs to the ClpA/ClpB family. Torsin subfamily.

Its subcellular location is the membrane. The sequence is that of Torsin-4A-B (tor4a-b) from Xenopus laevis (African clawed frog).